A 142-amino-acid chain; its full sequence is NCT transcriptional regulatory complex subunit B (142 aa).

Belongs to the NC2 beta/DR1 family. Forms the NCT transcriptional regulatory complex with nctA and mot1.

It localises to the nucleus. Part of the NCT transcriptional regulatory complex that acts as a key regulator of ergosterol biosynthesis and the azole exporter cdr1B. The NCT complex binds the promoters of genes linked to azole susceptibility, and especially represses the expression of cdr1B transporter. This is NCT transcriptional regulatory complex subunit B from Aspergillus fumigatus (strain CBS 144.89 / FGSC A1163 / CEA10) (Neosartorya fumigata).